The following is a 426-amino-acid chain: Histidinol dehydrogenase (426 aa).

Positions 130, 187, and 210 each coordinate NAD(+). Positions 233, 255, and 258 each coordinate substrate. Zn(2+) contacts are provided by Gln255 and His258. Active-site proton acceptor residues include Glu323 and His324. Substrate is bound by residues His324, Asp357, Glu411, and His416. Residue Asp357 coordinates Zn(2+). His416 contacts Zn(2+).

Belongs to the histidinol dehydrogenase family. Zn(2+) is required as a cofactor.

It catalyses the reaction L-histidinol + 2 NAD(+) + H2O = L-histidine + 2 NADH + 3 H(+). It functions in the pathway amino-acid biosynthesis; L-histidine biosynthesis; L-histidine from 5-phospho-alpha-D-ribose 1-diphosphate: step 9/9. Functionally, catalyzes the sequential NAD-dependent oxidations of L-histidinol to L-histidinaldehyde and then to L-histidine. This is Histidinol dehydrogenase (hisD) from Aquifex aeolicus (strain VF5).